We begin with the raw amino-acid sequence, 199 residues long: Protein p2 (199 aa).

The protein localises to the host cytoplasm. The chain is Protein p2 from Avena sativa (Oat).